The following is a 161-amino-acid chain: Nucleotide-binding protein PFLU_4927 (161 aa).

Belongs to the YajQ family.

Its function is as follows. Nucleotide-binding protein. The protein is Nucleotide-binding protein PFLU_4927 of Pseudomonas fluorescens (strain SBW25).